We begin with the raw amino-acid sequence, 154 residues long: Superoxide dismutase [Cu-Zn] (154 aa).

Residues His-47, His-49, and His-64 each contribute to the Cu cation site. Cys-58 and Cys-147 are disulfide-bonded. Residues 62–89 (GPHFNPFKKNHGGPTDSERHVGDLGNVK) are disordered. Zn(2+)-binding residues include His-64, His-72, His-81, and Asp-84. Position 121 (His-121) interacts with Cu cation. Arg-144 contacts substrate.

The protein belongs to the Cu-Zn superoxide dismutase family. In terms of assembly, homodimer. Cu cation serves as cofactor. Zn(2+) is required as a cofactor.

The protein localises to the cytoplasm. It catalyses the reaction 2 superoxide + 2 H(+) = H2O2 + O2. Its function is as follows. Destroys radicals which are normally produced within the cells and which are toxic to biological systems. This is Superoxide dismutase [Cu-Zn] (SOD1) from Yarrowia lipolytica (strain CLIB 122 / E 150) (Yeast).